Here is a 136-residue protein sequence, read N- to C-terminus: T-cell receptor alpha chain constant (136 aa).

The region spanning 19-103 (STLCLFTDFD…LTEKSFETDM (85 aa)) is the Ig-like C1-type domain. Cysteine 22 and cysteine 72 are disulfide-bonded. Residues asparagine 66, asparagine 80, and asparagine 109 are each glycosylated (N-linked (GlcNAc...) asparagine). Residues 90 to 111 (CDATLTEKSFETDMNLNFQNLS) are connecting peptide. Residues 111–131 (SVMGLRILLLKVAGFNLLMTL) traverse the membrane as a helical segment. Over 132–136 (RLWSS) the chain is Cytoplasmic.

In terms of assembly, alpha-beta TR is a heterodimer composed of an alpha and beta chain; disulfide-linked. The alpha-beta TR is associated with the transmembrane signaling CD3 coreceptor proteins to form the TR-CD3 (TcR or TCR). The assembly of alpha-beta TR heterodimers with CD3 occurs in the endoplasmic reticulum where a single alpha-beta TR heterodimer associates with one CD3D-CD3E heterodimer, one CD3G-CD3E heterodimer and one CD247 homodimer forming a stable octameric structure. CD3D-CD3E and CD3G-CD3E heterodimers preferentially associate with TR alpha and TR beta chains, respectively. The association of the CD247 homodimer is the last step of TcR assembly in the endoplasmic reticulum and is required for transport to the cell surface.

It is found in the cell membrane. In terms of biological role, constant region of T cell receptor (TR) alpha chain. Alpha-beta T cell receptors are antigen specific receptors which are essential to the immune response and are present on the cell surface of T lymphocytes. Recognize peptide-major histocompatibility (MH) (pMH) complexes that are displayed by antigen presenting cells (APC), a prerequisite for efficient T cell adaptive immunity against pathogens. Binding of alpha-beta TR to pMH complex initiates TR-CD3 clustering on the cell surface and intracellular activation of LCK that phosphorylates the ITAM motifs of CD3G, CD3D, CD3E and CD247 enabling the recruitment of ZAP70. In turn, ZAP70 phosphorylates LAT, which recruits numerous signaling molecules to form the LAT signalosome. The LAT signalosome propagates signal branching to three major signaling pathways, the calcium, the mitogen-activated protein kinase (MAPK) kinase and the nuclear factor NF-kappa-B (NF-kB) pathways, leading to the mobilization of transcription factors that are critical for gene expression and essential for T cell growth and differentiation. The T cell repertoire is generated in the thymus, by V-(D)-J rearrangement. This repertoire is then shaped by intrathymic selection events to generate a peripheral T cell pool of self-MH restricted, non-autoaggressive T cells. Post-thymic interaction of alpha-beta TR with the pMH complexes shapes TR structural and functional avidity. The polypeptide is T-cell receptor alpha chain constant (Mus musculus (Mouse)).